Consider the following 629-residue polypeptide: MPSTRNIEKLNDSNPTLRTLSLSALGIVYGDIGTSPLYTFKTVILLAGGGTPDVNTIMGSVSLIIWTLIIIASVKYISFALRIDNDGEGGILALMSLLSLKLKHRPFIIAVGLMGAALIYGDGTITPAISVLSAIEGLEILSPSLKYYVLPIAITILITLFAIQSKGTATIGKAFGPVMAFWFLTIGILGARGVIQHPFVLAAINPVYGLNFLFSNGATGFFILCGVFLCVTGAEALYADLGHFGTAPIRCAWFGLAFPSLIFNYLGQAALVLEGASTEHNIFYMLCPSDFLLPLIILSTVATIIASQAIITGAFSMTRQAMQLGWLPRLRVTQTSSEGYGQIYIGVVNWFLMLATLGLTIGFGSSEKLAAAYGIAVSATMLCTTVLLFIALHKLWKWNIITSGLVAGLFMIVDASFFAANLTKFINGGYIPITLAIIIYSMMYIWHKGYKTIAIKQKEKNITVDSFLDSIQKEGVVRVPKTAVFLTSKEQDIPPILVWHVKKNRVLQDKVIILNINNLSIPWCKPADQLQIVETGAGIWHAVANYGFMEQPHIPKLLKKLEAQGYDINIKDITYYIGHETIFVRNVRHTMSKYIKILFVFMHRNALPMSNYFHLPPESVFEIGRQIEI.

The next 12 membrane-spanning stretches (helical) occupy residues 20 to 40, 61 to 81, 106 to 126, 143 to 163, 171 to 191, 212 to 232, 253 to 273, 291 to 311, 343 to 363, 372 to 392, 400 to 420, and 425 to 445; these read LSLS…LYTF, VSLI…SFAL, PFII…GTIT, PSLK…LFAI, IGKA…ILGA, FLFS…LCVT, WFGL…ALVL, FLLP…QAII, IYIG…TIGF, AYGI…FIAL, IITS…FFAA, and FING…MMYI.

Belongs to the HAK/KUP transporter (TC 2.A.72) family.

Its subcellular location is the cell inner membrane. It carries out the reaction K(+)(in) + H(+)(in) = K(+)(out) + H(+)(out). Its function is as follows. Transport of potassium into the cell. Likely operates as a K(+):H(+) symporter. The protein is Probable potassium transport system protein Kup 3 of Legionella pneumophila (strain Lens).